The sequence spans 433 residues: Enolase (433 aa).

Gln167 is a (2R)-2-phosphoglycerate binding site. Catalysis depends on Glu209, which acts as the Proton donor. Residues Asp246, Glu291, and Asp318 each contribute to the Mg(2+) site. Residues Lys343, Arg372, Ser373, and Lys394 each coordinate (2R)-2-phosphoglycerate. The active-site Proton acceptor is the Lys343.

This sequence belongs to the enolase family. Component of the RNA degradosome, a multiprotein complex involved in RNA processing and mRNA degradation. Mg(2+) serves as cofactor.

It localises to the cytoplasm. It is found in the secreted. The protein localises to the cell surface. It carries out the reaction (2R)-2-phosphoglycerate = phosphoenolpyruvate + H2O. Its pathway is carbohydrate degradation; glycolysis; pyruvate from D-glyceraldehyde 3-phosphate: step 4/5. Catalyzes the reversible conversion of 2-phosphoglycerate (2-PG) into phosphoenolpyruvate (PEP). It is essential for the degradation of carbohydrates via glycolysis. In Photobacterium profundum (strain SS9), this protein is Enolase.